Reading from the N-terminus, the 365-residue chain is 3-dehydroquinate synthase (365 aa).

NAD(+) is bound by residues 69–74 (DGEKYK), 103–107 (GVIGD), 127–128 (TT), lysine 140, and lysine 149. Zn(2+) contacts are provided by glutamate 182, histidine 245, and histidine 262.

This sequence belongs to the sugar phosphate cyclases superfamily. Dehydroquinate synthase family. Requires Co(2+) as cofactor. Zn(2+) is required as a cofactor. NAD(+) serves as cofactor.

The protein localises to the cytoplasm. It catalyses the reaction 7-phospho-2-dehydro-3-deoxy-D-arabino-heptonate = 3-dehydroquinate + phosphate. It functions in the pathway metabolic intermediate biosynthesis; chorismate biosynthesis; chorismate from D-erythrose 4-phosphate and phosphoenolpyruvate: step 2/7. Functionally, catalyzes the conversion of 3-deoxy-D-arabino-heptulosonate 7-phosphate (DAHP) to dehydroquinate (DHQ). The sequence is that of 3-dehydroquinate synthase from Pseudomonas entomophila (strain L48).